The following is a 221-amino-acid chain: Putative 3-methyladenine DNA glycosylase (221 aa).

This sequence belongs to the DNA glycosylase MPG family.

In Herpetosiphon aurantiacus (strain ATCC 23779 / DSM 785 / 114-95), this protein is Putative 3-methyladenine DNA glycosylase.